A 340-amino-acid polypeptide reads, in one-letter code: Uroporphyrinogen decarboxylase (340 aa).

Substrate-binding positions include 21–25, aspartate 71, tyrosine 148, serine 203, and histidine 316; that span reads RQAGR.

It belongs to the uroporphyrinogen decarboxylase family. In terms of assembly, homodimer.

The protein resides in the cytoplasm. The catalysed reaction is uroporphyrinogen III + 4 H(+) = coproporphyrinogen III + 4 CO2. It functions in the pathway porphyrin-containing compound metabolism; protoporphyrin-IX biosynthesis; coproporphyrinogen-III from 5-aminolevulinate: step 4/4. Catalyzes the decarboxylation of four acetate groups of uroporphyrinogen-III to yield coproporphyrinogen-III. In Campylobacter lari (strain RM2100 / D67 / ATCC BAA-1060), this protein is Uroporphyrinogen decarboxylase.